The following is a 295-amino-acid chain: Urease accessory protein UreD (295 aa).

Belongs to the UreD family. As to quaternary structure, ureD, UreF and UreG form a complex that acts as a GTP-hydrolysis-dependent molecular chaperone, activating the urease apoprotein by helping to assemble the nickel containing metallocenter of UreC. The UreE protein probably delivers the nickel.

It is found in the cytoplasm. Functionally, required for maturation of urease via the functional incorporation of the urease nickel metallocenter. The protein is Urease accessory protein UreD of Saccharophagus degradans (strain 2-40 / ATCC 43961 / DSM 17024).